We begin with the raw amino-acid sequence, 471 residues long: Phosphoglycerate kinase (471 aa).

Residues 24-26 (DFN), Arg41, 64-67 (HLSR), Arg127, and Arg169 each bind substrate. Residues Lys220, Gly307, Glu338, and 368-371 (GGDS) each bind ATP. Residues 417–471 (KVEAVKEKTTTTTESASKEKSSTAKTASKPATSKTTAAKKPAEKKPAAKKPAAKK) form a disordered region. A compositionally biased stretch (low complexity) spans 439–455 (TAKTASKPATSKTTAAK).

This sequence belongs to the phosphoglycerate kinase family. As to quaternary structure, monomer.

The protein resides in the cytoplasm. It catalyses the reaction (2R)-3-phosphoglycerate + ATP = (2R)-3-phospho-glyceroyl phosphate + ADP. The protein operates within carbohydrate degradation; glycolysis; pyruvate from D-glyceraldehyde 3-phosphate: step 2/5. In Malacoplasma penetrans (strain HF-2) (Mycoplasma penetrans), this protein is Phosphoglycerate kinase.